Reading from the N-terminus, the 468-residue chain is A-type ATP synthase subunit B (468 aa).

The protein belongs to the ATPase alpha/beta chains family. Has multiple subunits with at least A(3), B(3), C, D, E, F, H, I and proteolipid K(x).

The protein resides in the cell membrane. Component of the A-type ATP synthase that produces ATP from ADP in the presence of a proton gradient across the membrane. The B chain is a regulatory subunit. This Haloferax volcanii (strain ATCC 29605 / DSM 3757 / JCM 8879 / NBRC 14742 / NCIMB 2012 / VKM B-1768 / DS2) (Halobacterium volcanii) protein is A-type ATP synthase subunit B.